The following is a 209-amino-acid chain: Thymidine kinase (209 aa).

Residues 25–32 (GCMFAGKT) and 103–106 (DEVQ) each bind ATP. Catalysis depends on glutamate 104, which acts as the Proton acceptor. The Zn(2+) site is built by cysteine 160, cysteine 163, cysteine 198, and cysteine 201.

It belongs to the thymidine kinase family. As to quaternary structure, homotetramer.

The protein localises to the cytoplasm. The catalysed reaction is thymidine + ATP = dTMP + ADP + H(+). This chain is Thymidine kinase, found in Mycoplasma capricolum subsp. capricolum (strain California kid / ATCC 27343 / NCTC 10154).